A 295-amino-acid chain; its full sequence is MNATALLIGLGPLLGWGLFPTIASKIGGRPVNQILGTSLGTLIFAAIFSMINGLAFPAGMDLFFSILSGVGWACAQIITFKCFTMIGSSRAMPVTTAFQLLGASLWGVFFLGNWPGATAKLLGAFALVLIMIGAKMTVWSETESAESAGIMKKAVLLLAVGEIGYWAYSAAPQATAIDGMHAFLPQAIGMVIVAVIYSAVVTIKGGEISPFIEAVSYKQIFSGFFFAFAALTYLISAQPDMNGLATGFILSQTSVVLATLTGIWFLGQKKTAKEMTVTIIGLVLILAAATITVMI.

The next 10 helical transmembrane spans lie at 5–24 (ALLI…TIAS), 34–56 (ILGT…GLAF), 63–80 (FFSI…IITF), 95–114 (TTAF…LGNW), 121–139 (LLGA…MTVW), 154–171 (AVLL…YSAA), 183–205 (FLPQ…TIKG), 220–237 (IFSG…LISA), 244–266 (LATG…IWFL), and 276–293 (TVTI…TITV).

Belongs to the GRP transporter (TC 2.A.7.5) family.

It is found in the cell membrane. Could be involved in the uptake of ribose. In Enterococcus faecalis (strain ATCC 700802 / V583), this protein is Putative ribose uptake protein RbsU (rbsU).